The primary structure comprises 383 residues: BRISC and BRCA1-A complex member 2 (383 aa).

At Met1 the chain carries N-acetylmethionine. Residue Ser2 is modified to Phosphoserine. 2 UEV-like regions span residues 30 to 147 (DATN…TLLE) and 275 to 364 (IAAF…RAKA).

This sequence belongs to the BABAM2 family. In terms of assembly, component of the ARISC complex, at least composed of UIMC1/RAP80, ABRAXAS1, BRCC3/BRCC36, BABAM2 and BABAM1/NBA1. Component of the BRCA1-A complex, at least composed of BRCA1, BARD1, UIMC1/RAP80, ABRAXAS1, BRCC3/BRCC36, BABAM2 and BABAM1/NBA1. In the BRCA1-A complex, interacts directly with ABRAXAS1, BRCC3/BRCC36 and BABAM1/NBA1. Binds polyubiquitin. Component of the BRISC complex, at least composed of ABRAXAS2, BRCC3/BRCC36, BABAM2 and BABAM1/NBA1. Identified in a complex with SHMT2 and the other subunits of the BRISC complex. Component of the BRCA1/BRCA2 containing complex (BRCC), which also contains BRCA1, BRCA2, BARD1, BRCC3/BRCC36 and RAD51. BRCC is a ubiquitin E3 ligase complex that enhances cellular survival following DNA damage. May interact with FAS and TNFRSF1A.

It is found in the cytoplasm. Its subcellular location is the nucleus. Component of the BRCA1-A complex, a complex that specifically recognizes 'Lys-63'-linked ubiquitinated histones H2A and H2AX at DNA lesions sites, leading to target the BRCA1-BARD1 heterodimer to sites of DNA damage at double-strand breaks (DSBs). The BRCA1-A complex also possesses deubiquitinase activity that specifically removes 'Lys-63'-linked ubiquitin on histones H2A and H2AX. In the BRCA1-A complex, it acts as an adapter that bridges the interaction between BABAM1/NBA1 and the rest of the complex, thereby being required for the complex integrity and modulating the E3 ubiquitin ligase activity of the BRCA1-BARD1 heterodimer. Component of the BRISC complex, a multiprotein complex that specifically cleaves 'Lys-63'-linked ubiquitin in various substrates. Within the BRISC complex, acts as an adapter that bridges the interaction between BABAM1/NBA1 and the rest of the complex, thereby being required for the complex integrity. The BRISC complex is required for normal mitotic spindle assembly and microtubule attachment to kinetochores via its role in deubiquitinating NUMA1. The BRISC complex plays a role in interferon signaling via its role in the deubiquitination of the interferon receptor IFNAR1; deubiquitination increases IFNAR1 activity by enhancing its stability and cell surface expression. Down-regulates the response to bacterial lipopolysaccharide (LPS) via its role in IFNAR1 deubiquitination. May play a role in homeostasis or cellular differentiation in cells of neural, epithelial and germline origins. May also act as a death receptor-associated anti-apoptotic protein, which inhibits the mitochondrial apoptotic pathway. May regulate TNF-alpha signaling through its interactions with TNFRSF1A; however these effects may be indirect. This Bos taurus (Bovine) protein is BRISC and BRCA1-A complex member 2 (BABAM2).